We begin with the raw amino-acid sequence, 213 residues long: Pyrrolidone-carboxylate peptidase (213 aa).

Catalysis depends on residues Glu-78, Cys-141, and His-165.

Belongs to the peptidase C15 family. Homotetramer.

The protein localises to the cytoplasm. The enzyme catalyses Release of an N-terminal pyroglutamyl group from a polypeptide, the second amino acid generally not being Pro.. Its function is as follows. Removes 5-oxoproline from various penultimate amino acid residues except L-proline. The polypeptide is Pyrrolidone-carboxylate peptidase (Clostridium perfringens (strain ATCC 13124 / DSM 756 / JCM 1290 / NCIMB 6125 / NCTC 8237 / Type A)).